Here is a 521-residue protein sequence, read N- to C-terminus: Cytochrome P450 1A1 (521 aa).

Phe229 contributes to the substrate binding site. Position 463 (Cys463) interacts with heme.

This sequence belongs to the cytochrome P450 family. Heme serves as cofactor.

The protein localises to the endoplasmic reticulum membrane. The protein resides in the microsome membrane. The enzyme catalyses an organic molecule + reduced [NADPH--hemoprotein reductase] + O2 = an alcohol + oxidized [NADPH--hemoprotein reductase] + H2O + H(+). Cytochromes P450 are a group of heme-thiolate monooxygenases. They oxidize a variety of structurally unrelated compounds, including steroids, fatty acids, and xenobiotics. This Pleuronectes platessa (European plaice) protein is Cytochrome P450 1A1 (cyp1a1).